Here is a 411-residue protein sequence, read N- to C-terminus: Dual-specificity RNA methyltransferase RlmN (411 aa).

The active-site Proton acceptor is Glu124. Residues 130-379 form the Radical SAM core domain; it reads EEGRGTLCIS…IRTPRGRDIL (250 aa). Cys137 and Cys382 form a disulfide bridge. [4Fe-4S] cluster-binding residues include Cys144, Cys148, and Cys151. Residues 208–209, Ser240, 262–264, and Asn339 each bind S-adenosyl-L-methionine; these read GE and SLH. Catalysis depends on Cys382, which acts as the S-methylcysteine intermediate.

This sequence belongs to the radical SAM superfamily. RlmN family. [4Fe-4S] cluster is required as a cofactor.

The protein resides in the cytoplasm. The enzyme catalyses adenosine(2503) in 23S rRNA + 2 reduced [2Fe-2S]-[ferredoxin] + 2 S-adenosyl-L-methionine = 2-methyladenosine(2503) in 23S rRNA + 5'-deoxyadenosine + L-methionine + 2 oxidized [2Fe-2S]-[ferredoxin] + S-adenosyl-L-homocysteine. The catalysed reaction is adenosine(37) in tRNA + 2 reduced [2Fe-2S]-[ferredoxin] + 2 S-adenosyl-L-methionine = 2-methyladenosine(37) in tRNA + 5'-deoxyadenosine + L-methionine + 2 oxidized [2Fe-2S]-[ferredoxin] + S-adenosyl-L-homocysteine. Functionally, specifically methylates position 2 of adenine 2503 in 23S rRNA and position 2 of adenine 37 in tRNAs. m2A2503 modification seems to play a crucial role in the proofreading step occurring at the peptidyl transferase center and thus would serve to optimize ribosomal fidelity. The sequence is that of Dual-specificity RNA methyltransferase RlmN from Rhizobium meliloti (strain 1021) (Ensifer meliloti).